We begin with the raw amino-acid sequence, 353 residues long: MANSLRNVNDYDPFKYRPSYFDLEAPTESFALGKFVDAIEVKQMALDAFSESSMVSIATSQLPKTAYTATSFIESEYYSFPYLFNDQKYYWDYFDYKIPAADFAVLELELDLNNQQDQQIKDHFIDPAIKAYKQLGDSTGLFATKPLTEYQNDTHYLLGYPVVPTDHTQLWECKQGAERFSYGYFYSNMARLTKNLRQGDPNAGSKTHIEYSNELLDKDSMDQGIVRFSTFLGANINYHDYDYRQQGYGLTLTDTNLPGGSSGSLVFNQDKKISSIYSAATESDSVGYAQLLRTPRDVNGISVVSQSYDLIFGDSNTKRYYAMFAKKQQTHLYSEILKSTDEQYRYVVDKQFN.

This sequence belongs to the MG067/MG068/MG395 family.

This is an uncharacterized protein from Mycoplasma pneumoniae (strain ATCC 29342 / M129 / Subtype 1) (Mycoplasmoides pneumoniae).